We begin with the raw amino-acid sequence, 175 residues long: CDP-archaeol synthase (175 aa).

The next 4 membrane-spanning stretches (helical) occupy residues 41-61 (GLFSGIFCGFLAGCVEVWLSF), 82-102 (LIVVLALASGALFGDMFKSFF), 122-142 (FVVGAWVFTYLAAPEWFVSNF), and 150-170 (VIIITPLLHLTTNIIGYFIGV).

The protein belongs to the CDP-archaeol synthase family. Mg(2+) is required as a cofactor.

Its subcellular location is the cell membrane. The enzyme catalyses 2,3-bis-O-(geranylgeranyl)-sn-glycerol 1-phosphate + CTP + H(+) = CDP-2,3-bis-O-(geranylgeranyl)-sn-glycerol + diphosphate. The protein operates within membrane lipid metabolism; glycerophospholipid metabolism. Catalyzes the formation of CDP-2,3-bis-(O-geranylgeranyl)-sn-glycerol (CDP-archaeol) from 2,3-bis-(O-geranylgeranyl)-sn-glycerol 1-phosphate (DGGGP) and CTP. This reaction is the third ether-bond-formation step in the biosynthesis of archaeal membrane lipids. The polypeptide is CDP-archaeol synthase (Methanosarcina mazei (strain ATCC BAA-159 / DSM 3647 / Goe1 / Go1 / JCM 11833 / OCM 88) (Methanosarcina frisia)).